Here is a 1203-residue protein sequence, read N- to C-terminus: Potassium/sodium hyperpolarization-activated cyclic nucleotide-gated channel 4 (1203 aa).

The segment at 1-182 (MDKLPPSMRK…QPASASCEQP (182 aa)) is disordered. At 1–263 (MDKLPPSMRK…IIHPYSDFRF (263 aa)) the chain is on the cytoplasmic side. Residues 26-36 (MDEEEDAEEEG) are compositionally biased toward acidic residues. Gly residues predominate over residues 105 to 117 (SRGGGSGGTGSGS). Residues 121 to 133 (HLHDSAEERRLIA) show a composition bias toward basic and acidic residues. The residue at position 138 (Ser138) is a Phosphoserine. Pro residues predominate over residues 163–174 (ASPPPPQQPPQP). Residues 209–260 (GQAGFMQRQFGAMLQPGVNKFSLRMFGSQKAVEREQERVKSAGFWIIHPYSD) form an involved in subunit assembly region. The helical transmembrane segment at 264-286 (YWDLTMLLLMVGNLIIIPVGITF) threads the bilayer. At 287–293 (FKDENTT) the chain is on the extracellular side. The chain crosses the membrane as a helical span at residues 294 to 314 (PWIVFNVVSDTFFLIDLVLNF). The Cytoplasmic segment spans residues 315–336 (RTGIVVEDNTEIILDPQRIKMK). A helical transmembrane segment spans residues 337–359 (YLKSWFMVDFISSIPVDYIFLIV). Topologically, residues 360–378 (ETRIDSEVYKTARALRIVR) are extracellular. The helical; Voltage-sensor transmembrane segment at 379–399 (FTKILSLLRLLRLSRLIRYIH) threads the bilayer. At 400 to 413 (QWEEIFHMTYDLAS) the chain is on the cytoplasmic side. Residues 414 to 436 (AVVRIVNLIGMMLLLCHWDGCLQ) traverse the membrane as a helical segment. Topologically, residues 437–464 (FLVPMLQDFPDDCWVSINNMVNNSWGKQ) are extracellular. Asn458 carries an N-linked (GlcNAc...) asparagine glycan. The pore-forming intramembrane region spans 465–486 (YSYALFKAMSHMLCIGYGRQAP). The Extracellular segment spans residues 487 to 491 (VGMSD). A helical transmembrane segment spans residues 492–517 (VWLTMLSMIVGATCYAMFIGHATALI). Residues 518–1203 (QSLDSSRRQY…PVRSKLPSNL (686 aa)) lie on the Cytoplasmic side of the membrane. 3',5'-cyclic GMP is bound by residues Tyr559, Lys562, Phe564, and Glu566. 3',5'-cyclic AMP contacts are provided by Gly659, Glu660, Cys662, Arg669, Thr670, Val673, and Arg710. Disordered regions lie at residues 836 to 856 (ALGSASPASSPSQVDTPSSSS), 870 to 897 (GLSPLLPSSSSSPPPGACGSPSAPTPSA), and 918 to 1203 (LSSS…PSNL). Low complexity-rich tracts occupy residues 918-941 (LSSSDSPLLTPLQPGARSPQAAQP) and 966-986 (RSPSSSPGQLGQPPGELSLGL). The span at 995–1004 (ETPPRQPEPP) shows a compositional bias: pro residues. The span at 1005 to 1028 (SLVAGASGGASPVGFTPRGGLSPP) shows a compositional bias: low complexity. The span at 1029–1042 (GHSPGPPRTFPSAP) shows a compositional bias: pro residues. Low complexity predominate over residues 1045-1056 (ASGSHGSLLLPP). Residues Ser1105 and Ser1108 each carry the phosphoserine modification. The segment covering 1122–1137 (AGGGSGGSGSSGGLGP) has biased composition (gly residues).

The protein belongs to the potassium channel HCN family. Homotetramer. The channel assemble into homotetramers or heteromeric complexes that contains of four pore-forming subunits. Interacts with PEX5L with a 4:4 HCN4:PEX5L stoichiometry; reduces the effects of cAMP on the voltage-dependence and rate of activation. Interacts with IRAG1; regulates HCN4 channel activity. Interacts with IRAG2; regulates HCN4 channel activity. In terms of processing, S-palmitoylated. In terms of tissue distribution, highly expressed in thalamus, testis and in heart, both in ventricle and atrium. Detected at much lower levels in amygdala, substantia nigra, cerebellum and hippocampus.

It is found in the cell membrane. It catalyses the reaction K(+)(in) = K(+)(out). The catalysed reaction is Na(+)(in) = Na(+)(out). With respect to regulation, activated by cAMP and to a lesser extent by cGMP and cCMP. cAMP binding causes a conformation change that leads to the assembly of an active tetramer and channel opening. Binding of cAMP removes a tonic inhibition conferred by cyclic nucleotide-binding domain (CNBD) on channel opening. Cyclic dinucleotides can modulate HCN4 channel; cyclic dinucleotides acting as potent antagonists of cAMP. Inhibited by extracellular Cs(+) ions. Auxiliary subunits can also regulate HCN4 channel. IRAG1 causes a gain-of-function by shifting HCN4 activation to more depolarized membrane potentials in the absence of cAMP. In contrast, IRAG2 causes a loss-of-function by inhibiting cAMP-dependent potentiation of HCN4 activation. Hyperpolarization-activated ion channel that are permeable to Na(+) and K(+) ions with very slow activation and inactivation. Exhibits higher selectivity for K(+) over Na(+) ions. Contributes to the native pacemaker currents in heart (If) that regulate the rhythm of heart beat. Contributes to the native pacemaker currents in neurons (Ih). May mediate responses to sour stimuli. The chain is Potassium/sodium hyperpolarization-activated cyclic nucleotide-gated channel 4 from Homo sapiens (Human).